Consider the following 237-residue polypeptide: Deoxyribose-phosphate aldolase (237 aa).

Residue Asp94 is the Proton donor/acceptor of the active site. The active-site Schiff-base intermediate with acetaldehyde is Lys158. Residue Lys187 is the Proton donor/acceptor of the active site.

It belongs to the DeoC/FbaB aldolase family. DeoC type 1 subfamily.

It localises to the cytoplasm. It catalyses the reaction 2-deoxy-D-ribose 5-phosphate = D-glyceraldehyde 3-phosphate + acetaldehyde. The protein operates within carbohydrate degradation; 2-deoxy-D-ribose 1-phosphate degradation; D-glyceraldehyde 3-phosphate and acetaldehyde from 2-deoxy-alpha-D-ribose 1-phosphate: step 2/2. Catalyzes a reversible aldol reaction between acetaldehyde and D-glyceraldehyde 3-phosphate to generate 2-deoxy-D-ribose 5-phosphate. The polypeptide is Deoxyribose-phosphate aldolase (Lactobacillus acidophilus (strain ATCC 700396 / NCK56 / N2 / NCFM)).